A 92-amino-acid chain; its full sequence is Elongation factor 1-beta (92 aa).

It belongs to the EF-1-beta/EF-1-delta family.

Promotes the exchange of GDP for GTP in EF-1-alpha/GDP, thus allowing the regeneration of EF-1-alpha/GTP that could then be used to form the ternary complex EF-1-alpha/GTP/AAtRNA. The sequence is that of Elongation factor 1-beta from Pyrobaculum arsenaticum (strain DSM 13514 / JCM 11321 / PZ6).